A 315-amino-acid polypeptide reads, in one-letter code: Olfactory receptor 5M1 (315 aa).

Topologically, residues 1 to 25 (MFSPNHTIVTEFILLGLTDDPVLEK) are extracellular. N-linked (GlcNAc...) asparagine glycosylation occurs at Asn-5. Residues 26 to 46 (ILFGVFLAIYLITLAGNLCMI) form a helical membrane-spanning segment. At 47–54 (LLIRTNSH) the chain is on the cytoplasmic side. Residues 55–75 (LQTPMYFFLGHLSFVDICYSS) form a helical membrane-spanning segment. Over 76–99 (NVTPNMLHNFLSEQKTISYAGCFT) the chain is Extracellular. Cys-97 and Cys-189 are disulfide-bonded. A helical membrane pass occupies residues 100–120 (QCLLFIALVITEFYILASMAL). Topologically, residues 121–139 (DRYVAICSPLHYSSRMSKN) are cytoplasmic. A helical transmembrane segment spans residues 140–160 (ICVCLVTIPYMYGFLSGFSQS). Residues 161–196 (LLTFHLSFCGSLEINHFYCADPPLIMLACSDTRVKK) lie on the Extracellular side of the membrane. A helical membrane pass occupies residues 197–217 (MAMFVVAGFNLSSSLFIILLS). Residues 218–237 (YLFIFAAIFRIRSAEGRHKA) are Cytoplasmic-facing. Residues 238-258 (FSTCASHLTIVTLFYGTLFCM) form a helical membrane-spanning segment. The Extracellular portion of the chain corresponds to 259–271 (YVRPPSEKSVEES). A helical membrane pass occupies residues 272-292 (KITAVFYTFLSPMLNPLIYSL). Topologically, residues 293 to 315 (RNTDVILAMQQMIRGKSFHKIAV) are cytoplasmic.

It belongs to the G-protein coupled receptor 1 family.

The protein resides in the cell membrane. Functionally, odorant receptor. In Homo sapiens (Human), this protein is Olfactory receptor 5M1 (OR5M1).